Consider the following 321-residue polypeptide: Methionyl-tRNA formyltransferase (321 aa).

Residue 112–115 (GLLP) participates in (6S)-5,6,7,8-tetrahydrofolate binding.

The protein belongs to the Fmt family.

It carries out the reaction L-methionyl-tRNA(fMet) + (6R)-10-formyltetrahydrofolate = N-formyl-L-methionyl-tRNA(fMet) + (6S)-5,6,7,8-tetrahydrofolate + H(+). Attaches a formyl group to the free amino group of methionyl-tRNA(fMet). The formyl group appears to play a dual role in the initiator identity of N-formylmethionyl-tRNA by promoting its recognition by IF2 and preventing the misappropriation of this tRNA by the elongation apparatus. The polypeptide is Methionyl-tRNA formyltransferase (Chlamydia caviae (strain ATCC VR-813 / DSM 19441 / 03DC25 / GPIC) (Chlamydophila caviae)).